Reading from the N-terminus, the 338-residue chain is Aspartate-semialdehyde dehydrogenase (338 aa).

NADP(+) is bound by residues 13–16 (TGNV) and 41–42 (NS). Residue Arg-101 coordinates phosphate. The active-site Acyl-thioester intermediate is Cys-132. Position 159 (Gln-159) interacts with substrate. Residues 162 to 163 (SG) and Pro-187 each bind NADP(+). Residue Lys-216 participates in phosphate binding. Arg-237 is a substrate binding site. The Proton acceptor role is filled by His-244. Asn-317 lines the NADP(+) pocket.

Belongs to the aspartate-semialdehyde dehydrogenase family. In terms of assembly, homodimer.

The enzyme catalyses L-aspartate 4-semialdehyde + phosphate + NADP(+) = 4-phospho-L-aspartate + NADPH + H(+). It functions in the pathway amino-acid biosynthesis; L-lysine biosynthesis via DAP pathway; (S)-tetrahydrodipicolinate from L-aspartate: step 2/4. The protein operates within amino-acid biosynthesis; L-methionine biosynthesis via de novo pathway; L-homoserine from L-aspartate: step 2/3. Its pathway is amino-acid biosynthesis; L-threonine biosynthesis; L-threonine from L-aspartate: step 2/5. Its function is as follows. Catalyzes the NADPH-dependent formation of L-aspartate-semialdehyde (L-ASA) by the reductive dephosphorylation of L-aspartyl-4-phosphate. This Rickettsia typhi (strain ATCC VR-144 / Wilmington) protein is Aspartate-semialdehyde dehydrogenase.